Consider the following 667-residue polypeptide: Ribosomal oxygenase 1 (667 aa).

Position 1 is an N-acetylmethionine (Met1). The span at Met1–Leu11 shows a compositional bias: low complexity. Residues Met1–Leu99 form a disordered region. 2 stretches are compositionally biased toward basic residues: residues Arg12–Gln22 and Arg35–Arg44. Phosphoserine is present on residues Ser61, Ser64, and Ser108. A JmjC domain is found at Cys322 to Ala467. 3 residues coordinate Fe cation: His368, Asp370, and His433.

This sequence belongs to the ROX family. NO66 subfamily. Interacts with SP7/OSX; the interaction is direct. Interacts with MYC. Interacts with PHF19; leading to its recruitment to H3K36me3 sites. It depends on Fe(2+) as a cofactor.

The protein localises to the nucleus. It is found in the nucleolus. Its subcellular location is the nucleoplasm. The enzyme catalyses N(6),N(6)-dimethyl-L-lysyl(36)-[histone H3] + 2 2-oxoglutarate + 2 O2 = L-lysyl(36)-[histone H3] + 2 formaldehyde + 2 succinate + 2 CO2. It catalyses the reaction N(6)-methyl-L-lysyl-[protein] + 2-oxoglutarate + O2 = L-lysyl-[protein] + formaldehyde + succinate + CO2. It carries out the reaction L-histidyl-[protein] + 2-oxoglutarate + O2 = (3S)-3-hydroxy-L-histidyl-[protein] + succinate + CO2. Its function is as follows. Oxygenase that can act as both a histone lysine demethylase and a ribosomal histidine hydroxylase. Specifically demethylates 'Lys-4' (H3K4me) and 'Lys-36' (H3K36me) of histone H3, thereby playing a central role in histone code. Preferentially demethylates trimethylated H3 'Lys-4' (H3K4me3) and monomethylated H3 'Lys-4' (H3K4me1) residues, while it has weaker activity for dimethylated H3 'Lys-36' (H3K36me2). Acts as a regulator of osteoblast differentiation via its interaction with SP7/OSX by demethylating H3K4me and H3K36me, thereby inhibiting SP7/OSX-mediated promoter activation. Also catalyzes demethylation of non-histone proteins, such as CGAS: demethylation of monomethylated CGAS promotes interaction between CGAS and PARP1, followed by PARP1 inactivation. Also catalyzes the hydroxylation of 60S ribosomal protein L8 on 'His-216', thereby playing a role in ribosome biogenesis. Participates in MYC-induced transcriptional activation. In Bos taurus (Bovine), this protein is Ribosomal oxygenase 1 (RIOX1).